Reading from the N-terminus, the 216-residue chain is MTTPVSFHPQAFIELALSRGVLKFGEFTLKSGRVSPYFFNAGLLNDGEALSLLAQGYADKLTQCENVDVIFGPAYKGIPFVAATAVALSQTHNKSVPWGFNRKEAKDHGEGGVLVGAAVEGKKVWIIDDVITAGTAIREVVTILKNAGATIAGVLVALDRQERGQGELSAIQEVQKELEIPVHALITMKDLMDYLEAKGEKEALANMQAYREKYGI.

Residue Lys30 coordinates 5-phospho-alpha-D-ribose 1-diphosphate. Phe38–Phe39 is a binding site for orotate. 5-phospho-alpha-D-ribose 1-diphosphate-binding positions include Tyr75 to Lys76, Arg102, Lys103, Lys106, His108, and Asp128 to Ala136. Orotate is bound by residues Thr132 and Arg160.

The protein belongs to the purine/pyrimidine phosphoribosyltransferase family. PyrE subfamily. Homodimer. It depends on Mg(2+) as a cofactor.

The catalysed reaction is orotidine 5'-phosphate + diphosphate = orotate + 5-phospho-alpha-D-ribose 1-diphosphate. Its pathway is pyrimidine metabolism; UMP biosynthesis via de novo pathway; UMP from orotate: step 1/2. Its function is as follows. Catalyzes the transfer of a ribosyl phosphate group from 5-phosphoribose 1-diphosphate to orotate, leading to the formation of orotidine monophosphate (OMP). The sequence is that of Orotate phosphoribosyltransferase from Acinetobacter baumannii (strain ACICU).